The primary structure comprises 484 residues: tRNA sulfurtransferase (484 aa).

A THUMP domain is found at 63-167; it reads DVFADRLACI…QDKLYMVERR (105 aa). ATP is bound by residues 185 to 186, Lys-267, Gly-289, and Gln-298; that span reads LI. Cys-346 and Cys-458 are joined by a disulfide. One can recognise a Rhodanese domain in the interval 406–484; it reads VASGEIIIDV…GYTNVKVYRP (79 aa). Cys-458 functions as the Cysteine persulfide intermediate in the catalytic mechanism.

The protein belongs to the ThiI family.

The protein localises to the cytoplasm. The catalysed reaction is [ThiI sulfur-carrier protein]-S-sulfanyl-L-cysteine + a uridine in tRNA + 2 reduced [2Fe-2S]-[ferredoxin] + ATP + H(+) = [ThiI sulfur-carrier protein]-L-cysteine + a 4-thiouridine in tRNA + 2 oxidized [2Fe-2S]-[ferredoxin] + AMP + diphosphate. It carries out the reaction [ThiS sulfur-carrier protein]-C-terminal Gly-Gly-AMP + S-sulfanyl-L-cysteinyl-[cysteine desulfurase] + AH2 = [ThiS sulfur-carrier protein]-C-terminal-Gly-aminoethanethioate + L-cysteinyl-[cysteine desulfurase] + A + AMP + 2 H(+). The protein operates within cofactor biosynthesis; thiamine diphosphate biosynthesis. Its function is as follows. Catalyzes the ATP-dependent transfer of a sulfur to tRNA to produce 4-thiouridine in position 8 of tRNAs, which functions as a near-UV photosensor. Also catalyzes the transfer of sulfur to the sulfur carrier protein ThiS, forming ThiS-thiocarboxylate. This is a step in the synthesis of thiazole, in the thiamine biosynthesis pathway. The sulfur is donated as persulfide by IscS. This Shewanella frigidimarina (strain NCIMB 400) protein is tRNA sulfurtransferase.